Reading from the N-terminus, the 678-residue chain is Serine/threonine-protein kinase PLK (678 aa).

In terms of domain architecture, Protein kinase spans 22 to 309; it reads YRPGKLLGKG…VKECLDHSWL (288 aa). Residues 28 to 36 and lysine 51 contribute to the ATP site; that span reads LGKGGFAYV. The Proton acceptor role is filled by aspartate 145. Phosphothreonine; by autocatalysis is present on residues threonine 179 and threonine 183. 2 consecutive POLO box domains span residues 435-516 and 563-644; these read YIMS…YLEN and FLKK…IIKA. Residues 658-678 are disordered; it reads KDSTKKSASGSSTRQLGQGGE. A compositionally biased stretch (polar residues) spans 663-678; it reads KSASGSSTRQLGQGGE.

This sequence belongs to the protein kinase superfamily. Ser/Thr protein kinase family. CDC5/Polo subfamily. Interacts with Kin-13. Post-translationally, autophosphorylated. Autophosphorylation is critical for its function in cell growth, cytokinesis and formation of flagella.

The protein resides in the cell projection. It is found in the cilium. Its subcellular location is the flagellum. The protein localises to the cytoplasm. It localises to the cytoskeleton. The protein resides in the flagellum basal body. It is found in the flagellum axoneme. Its subcellular location is the spindle. The protein localises to the membrane. It catalyses the reaction L-seryl-[protein] + ATP = O-phospho-L-seryl-[protein] + ADP + H(+). The enzyme catalyses L-threonyl-[protein] + ATP = O-phospho-L-threonyl-[protein] + ADP + H(+). With respect to regulation, inhibited by GW843286X (GW), an ATP-competitive inhibitor. Inhibition leads to reduced growth, increased number of cells with more than four nuclei, increased number of cells with condensed nuclei, cell cycle arrest at G2/M or G1/S phase depending on the treatment time with GW, and increased length of membrane-bound portions of the caudal and anterior flagella. In terms of biological role, involved in cell cycle. Involved in cell division. Involved in cytokinesis. Involved in flagella biogenesis and in regulation of flagella length in interphase. Involved in formation of median bodies during interphase. Phosphorylates Kin-13 in vitro. Likely regulates microtubule (MT) depolymerizing activity of Kin-13. The chain is Serine/threonine-protein kinase PLK from Giardia intestinalis (strain ATCC 50803 / WB clone C6) (Giardia lamblia).